Reading from the N-terminus, the 1458-residue chain is Phospholipase B1, membrane-associated (1458 aa).

The signal sequence occupies residues 1-21 (MGLRPGIFLLELLLLLGQGTP). Residues 22-1417 (QIHTSPRKST…QAEEAPEVLY (1396 aa)) lie on the Extracellular side of the membrane. 3 tandem repeats follow at residues 39-347 (ETLK…YRNS), 362-707 (VREG…YKNS), and 708-1054 (MQGH…PRNS). The 4 X 308-326 AA approximate repeats stretch occupies residues 39-1402 (ETLKNSPFPC…SPYLYTLRNS (1364 aa)). 2 N-linked (GlcNAc...) asparagine glycosylation sites follow: asparagine 173 and asparagine 240. Residue serine 400 is part of the active site. Asparagine 493 is a glycosylation site (N-linked (GlcNAc...) asparagine). Residue aspartate 514 is part of the active site. N-linked (GlcNAc...) asparagine glycans are attached at residues asparagine 529 and asparagine 590. The active site involves histidine 655. Residues asparagine 690, asparagine 783, asparagine 797, asparagine 809, asparagine 1055, asparagine 1113, asparagine 1275, and asparagine 1378 are each glycosylated (N-linked (GlcNAc...) asparagine). Repeat unit 4 spans residues 1064–1402 (IENWGSDFLC…SPYLYTLRNS (339 aa)). The tract at residues 1403-1445 (RLLPDQAEEAPEVLYWAVPVAAGVGLVVGIIGTVVWRCRRGGR) is necessary for membrane localization. A helical membrane pass occupies residues 1418 to 1438 (WAVPVAAGVGLVVGIIGTVVW). Over 1439–1458 (RCRRGGRREDPPMSLRTVAL) the chain is Cytoplasmic.

Belongs to the 'GDSL' lipolytic enzyme family. Phospholipase B1 subfamily. Undergoes proteolytic cleavage in the ileum. Expressed in the epidermis (at protein level).

It localises to the apical cell membrane. It carries out the reaction a 1,2-diacyl-sn-glycero-3-phosphocholine + H2O = a 1-acyl-sn-glycero-3-phosphocholine + a fatty acid + H(+). It catalyses the reaction a 1-O-alkyl-2-acyl-sn-glycero-3-phosphocholine + H2O = a 1-O-alkyl-sn-glycero-3-phosphocholine + a fatty acid + H(+). The enzyme catalyses a 1-acyl-sn-glycero-3-phosphocholine + H2O = sn-glycerol 3-phosphocholine + a fatty acid + H(+). The catalysed reaction is a triacylglycerol + H2O = a diacylglycerol + a fatty acid + H(+). It carries out the reaction 1,2-dihexadecanoyl-sn-glycero-3-phosphocholine + H2O = 1-hexadecanoyl-sn-glycero-3-phosphocholine + hexadecanoate + H(+). It catalyses the reaction 1-hexadecanoyl-2-(9Z-octadecenoyl)-sn-glycero-3-phosphocholine + H2O = 1-hexadecanoyl-sn-glycero-3-phosphocholine + (9Z)-octadecenoate + H(+). The enzyme catalyses 1,2-di-(9Z-octadecenoyl)-sn-glycero-3-phosphocholine + H2O = 1-(9Z-octadecenoyl)-sn-glycero-3-phosphocholine + (9Z)-octadecenoate + H(+). The catalysed reaction is 1-hexadecanoyl-2-(9Z,12Z-octadecadienoyl)-sn-glycero-3-phosphocholine + H2O = (9Z,12Z)-octadecadienoate + 1-hexadecanoyl-sn-glycero-3-phosphocholine + H(+). It carries out the reaction 1-hexadecanoyl-2-(9Z,12Z-octadecadienoyl)-sn-glycero-3-phosphocholine + H2O = 2-(9Z,12Z-octadecadienoyl)-sn-glycero-3-phosphocholine + hexadecanoate + H(+). It catalyses the reaction 1-hexadecanoyl-2-(9Z-octadecenoyl)-sn-glycero-3-phosphoethanolamine + H2O = 1-hexadecanoyl-sn-glycero-3-phosphoethanolamine + (9Z)-octadecenoate + H(+). The enzyme catalyses 1-hexadecanoyl-2-(9Z-octadecenoyl)-sn-glycero-3-phospho-(1'-sn-glycerol) + H2O = 1-hexadecanoyl-sn-glycero-3-phospho-(1'-sn-glycerol) + (9Z)-octadecenoate + H(+). The catalysed reaction is 1,2-dihexadecanoyl-sn-glycero-3-phosphocholine + 2 H2O = sn-glycerol 3-phosphocholine + 2 hexadecanoate + 2 H(+). It carries out the reaction 1-O-hexadecyl-2-(9Z)-octadecenoyl-sn-glycero-3-phosphocholine + H2O = 1-O-hexadecyl-sn-glycero-3-phosphocholine + (9Z)-octadecenoate + H(+). It catalyses the reaction 1-hexadecanoyl-sn-glycero-3-phosphocholine + H2O = sn-glycerol 3-phosphocholine + hexadecanoate + H(+). The enzyme catalyses 1,2,3-tri-(9Z-octadecenoyl)-glycerol + H2O = di-(9Z)-octadecenoylglycerol + (9Z)-octadecenoate + H(+). The catalysed reaction is 1-hexadecanoyl-2-(9Z)-octadecenoyl-3-octadecanoyl-sn-glycerol + H2O = 1-hexadecanoyl-2-(9Z-octadecenoyl)-sn-glycerol + octadecanoate + H(+). It carries out the reaction 1,3-dihexadecanoyl-2-(9Z-octadecenoyl)glycerol + H2O = 1,3-dihexadecanoylglycerol + (9Z)-octadecenoate + H(+). It catalyses the reaction 1,3-dihexadecanoyl-2-(9Z-octadecenoyl)glycerol + H2O = 1-hexadecanoyl-2-(9Z-octadecenoyl)-glycerol + hexadecanoate + H(+). The enzyme catalyses 1-hexadecanoyl-2-(9Z)-octadecenoyl-3-octadecanoyl-sn-glycerol + H2O = 1-hexadecanoyl-3-octadecanoyl-sn-glycerol + (9Z)-octadecenoate + H(+). The catalysed reaction is 1-hexadecanoyl-2-(9Z)-octadecenoyl-3-octadecanoyl-sn-glycerol + H2O = 2-(9Z-octadecenoyl)-3-octadecanoyl-sn-glycerol + hexadecanoate + H(+). It carries out the reaction 1-octadecanoyl-2-(9Z,12Z)-octadecadienoyl-sn-glycerol + H2O = 1-octadecanoyl-sn-glycerol + (9Z,12Z)-octadecadienoate + H(+). It catalyses the reaction 1,2-di-(9Z-octadecenoyl)-sn-glycerol + H2O = 1-(9Z-octadecenoyl)-sn-glycerol + (9Z)-octadecenoate + H(+). The enzyme catalyses 2,3-di-(9Z)-octadecenoyl-sn-glycerol + H2O = 3-(9Z-octadecenoyl)-sn-glycerol + (9Z)-octadecenoate + H(+). The catalysed reaction is 1,3-di-(9Z-octadecenoyl)-glycerol + H2O = 1-(9Z-octadecenoyl)-glycerol + (9Z)-octadecenoate + H(+). It carries out the reaction 1-(9Z-octadecenoyl)-glycerol + H2O = glycerol + (9Z)-octadecenoate + H(+). It catalyses the reaction 2-(9Z-octadecenoyl)-glycerol + H2O = glycerol + (9Z)-octadecenoate + H(+). In terms of biological role, calcium-independent membrane-associated phospholipase that catalyzes complete diacylation of phospholipids by hydrolyzing both sn-1 and sn-2 fatty acyl chains attached to the glycerol backbone (phospholipase B activity). Has dual phospholipase and lysophospholipase activities toward diacylphospholipids. Preferentially cleaves sn-2 ester bonds over sn-1 bonds. Acts as a lipase toward glycerolipid substrates. Hydrolyzes fatty acyl chains of diacylglycerols with preference for the sn-2 position and of triacylglycerols with not positional selectivity. May also hydrolyze long chain retinyl esters such as retinyl palmitate. May contribute to digestion of dietary phospholipids, glycerolipids and retinoids, facilitating lipid absorption at the brush border. The chain is Phospholipase B1, membrane-associated (PLB1) from Homo sapiens (Human).